The following is a 158-amino-acid chain: 2-C-methyl-D-erythritol 2,4-cyclodiphosphate synthase (158 aa).

The a divalent metal cation site is built by Asp9 and His11. 4-CDP-2-C-methyl-D-erythritol 2-phosphate contacts are provided by residues 9-11 and 35-36; these read DVH and HS. His43 is a binding site for a divalent metal cation. 4-CDP-2-C-methyl-D-erythritol 2-phosphate-binding positions include 57 to 59, 62 to 66, 101 to 107, 133 to 136, Phe140, and Arg143; these read DIG, FPDTD, AQKPKMA, and TTTE.

This sequence belongs to the IspF family. As to quaternary structure, homotrimer. A divalent metal cation is required as a cofactor.

It catalyses the reaction 4-CDP-2-C-methyl-D-erythritol 2-phosphate = 2-C-methyl-D-erythritol 2,4-cyclic diphosphate + CMP. Its pathway is isoprenoid biosynthesis; isopentenyl diphosphate biosynthesis via DXP pathway; isopentenyl diphosphate from 1-deoxy-D-xylulose 5-phosphate: step 4/6. In terms of biological role, involved in the biosynthesis of isopentenyl diphosphate (IPP) and dimethylallyl diphosphate (DMAPP), two major building blocks of isoprenoid compounds. Catalyzes the conversion of 4-diphosphocytidyl-2-C-methyl-D-erythritol 2-phosphate (CDP-ME2P) to 2-C-methyl-D-erythritol 2,4-cyclodiphosphate (ME-CPP) with a corresponding release of cytidine 5-monophosphate (CMP). This chain is 2-C-methyl-D-erythritol 2,4-cyclodiphosphate synthase, found in Geobacillus sp. (strain WCH70).